The sequence spans 589 residues: Probable methyltransferase PMT23 (589 aa).

Over 1–4 (MAIS) the chain is Cytoplasmic. A helical; Signal-anchor for type II membrane protein membrane pass occupies residues 5–25 (VQHVVVLLLSTLLIAITFFLF). The Lumenal segment spans residues 26–589 (TSDNARFPFP…FWRPAKPELR (564 aa)). 3 N-linked (GlcNAc...) asparagine glycosylation sites follow: asparagine 70, asparagine 375, and asparagine 442.

This sequence belongs to the methyltransferase superfamily.

The protein resides in the golgi apparatus membrane. The polypeptide is Probable methyltransferase PMT23 (Arabidopsis thaliana (Mouse-ear cress)).